A 325-amino-acid chain; its full sequence is Biotin synthase (325 aa).

The 230-residue stretch at 49–278 folds into the Radical SAM core domain; that stretch reads FNGNIVDLCS…KASIRLAGGR (230 aa). [4Fe-4S] cluster contacts are provided by Cys-67, Cys-71, and Cys-74. [2Fe-2S] cluster-binding residues include Ser-111, Cys-143, Cys-203, and Arg-273.

The protein belongs to the radical SAM superfamily. Biotin synthase family. Homodimer. It depends on [4Fe-4S] cluster as a cofactor. [2Fe-2S] cluster serves as cofactor.

It catalyses the reaction (4R,5S)-dethiobiotin + (sulfur carrier)-SH + 2 reduced [2Fe-2S]-[ferredoxin] + 2 S-adenosyl-L-methionine = (sulfur carrier)-H + biotin + 2 5'-deoxyadenosine + 2 L-methionine + 2 oxidized [2Fe-2S]-[ferredoxin]. Its pathway is cofactor biosynthesis; biotin biosynthesis; biotin from 7,8-diaminononanoate: step 2/2. Functionally, catalyzes the conversion of dethiobiotin (DTB) to biotin by the insertion of a sulfur atom into dethiobiotin via a radical-based mechanism. The polypeptide is Biotin synthase (Clostridium tetani (strain Massachusetts / E88)).